Consider the following 396-residue polypeptide: Putative 2-hydroxyacid dehydrogenase YPL113C (396 aa).

NAD(+) contacts are provided by residues S227–I228, V311–R313, and D337. The active site involves R313. The active site involves E342. The Proton donor role is filled by H361. NAD(+) is bound at residue H361–S364.

It belongs to the D-isomer specific 2-hydroxyacid dehydrogenase family.

Its function is as follows. Putative 2-hydroxyacid dehydrogenase. This Saccharomyces cerevisiae (strain ATCC 204508 / S288c) (Baker's yeast) protein is Putative 2-hydroxyacid dehydrogenase YPL113C.